Consider the following 1064-residue polypeptide: Serine protease inhibitor Kazal-type 5 (1064 aa).

An N-terminal signal peptide occupies residues 1–22 (MKIATVSVLLPLALCLIQDAAS). Residues 28–66 (EMCHEFQAFMKNGKLFCPQDKKFFQSLDGIMFINKCATC) enclose the Kazal-like 1; atypical domain. Cystine bridges form between Cys30-Cys66, Cys44-Cys63, Cys97-Cys133, Cys111-Cys130, Cys119-Cys151, Cys161-Cys197, Cys175-Cys194, Cys225-Cys261, Cys239-Cys258, Cys297-Cys333, Cys311-Cys330, Cys367-Cys403, Cys381-Cys400, Cys437-Cys473, Cys451-Cys470, Cys496-Cys532, Cys510-Cys529, Cys567-Cys603, Cys581-Cys600, Cys632-Cys668, and Cys646-Cys665. Kazal-like domains are found at residues 91 to 153 (APTE…ECKS), 155 to 216 (NPEQ…ETRI), 219 to 285 (NAEK…KAEE), 291 to 352 (REIV…ARAR), 361 to 423 (TSYA…KSRN), 431 to 489 (ASFE…KAKR), 490 to 551 (EAAK…EEKG), 561 to 622 (EAVQ…PRAK), 626 to 688 (EAEK…EDQR), 701 to 757 (GNTQ…KNEY), 768 to 830 (ESGK…EDRS), 843 to 905 (NDKE…EKSS), 910 to 971 (NNAK…EKPS), and 987 to 1048 (SLDS…KCEE). Over residues 676–688 (NEERKRKEEEDQR) the composition is skewed to basic and acidic residues. Residues 676-705 (NEERKRKEEEDQRNAAGHGSSGGGGGNTQD) form a disordered region. Intrachain disulfides connect Cys707-Cys743, Cys721-Cys740, Cys774-Cys810, Cys788-Cys807, Cys849-Cys885, and Cys863-Cys882. The tract at residues 751–775 (AERKNEYSRSRSNGTGSESGKDTCD) is disordered. Positions 818 to 849 (AAEKKKKEDEDRSNTGERSNTGERSNDKEDLC) are disordered. Positions 895-905 (ERKKKDEEKSS) are enriched in basic and acidic residues. Positions 895-915 (ERKKKDEEKSSSKPSNNAKDE) are disordered. Disulfide bonds link Cys916/Cys952 and Cys930/Cys949. The span at 967–977 (QEKPSHVRASQ) shows a compositional bias: basic and acidic residues. The tract at residues 967 to 987 (QEKPSHVRASQEEDSPDSFSS) is disordered. Cystine bridges form between Cys993–Cys1028, Cys1006–Cys1025, and Cys1014–Cys1046. Positions 1041-1064 (RSTGKCEESSTPGTTAASMPPSDE) are disordered.

In terms of processing, proteolytically processed by furin in individual domains (D1, D5, D6, D8 through D11, and D9 through D15) exhibiting various inhibitory potentials for multiple proteases. In terms of tissue distribution, highly expressed in the thymus and stratum corneum. Also found in the oral mucosa, parathyroid gland, Bartholin's glands, tonsils, and vaginal epithelium. Very low levels are detected in lung, kidney, and prostate.

The protein localises to the secreted. Its function is as follows. Serine protease inhibitor, probably important for the anti-inflammatory and/or antimicrobial protection of mucous epithelia. Contribute to the integrity and protective barrier function of the skin by regulating the activity of defense-activating and desquamation-involved proteases. Inhibits KLK5, it's major target, in a pH-dependent manner. Inhibits KLK7, KLK14 CASP14, and trypsin. The chain is Serine protease inhibitor Kazal-type 5 (SPINK5) from Homo sapiens (Human).